A 314-amino-acid chain; its full sequence is Small ribosomal subunit biogenesis GTPase RsgA (314 aa).

The disordered stretch occupies residues 1-21 (MKRAPTKQPAKPAARGGERAQ). The CP-type G domain maps to 85-246 (SDQFKSKLFA…LIDSPGFQEF (162 aa)). Residues 134–137 (NKID) and 188–196 (GQSGMGKST) each bind GTP. The Zn(2+) site is built by cysteine 270, cysteine 275, histidine 277, and cysteine 283.

The protein belongs to the TRAFAC class YlqF/YawG GTPase family. RsgA subfamily. Monomer. Associates with 30S ribosomal subunit, binds 16S rRNA. It depends on Zn(2+) as a cofactor.

Its subcellular location is the cytoplasm. Its function is as follows. One of several proteins that assist in the late maturation steps of the functional core of the 30S ribosomal subunit. Helps release RbfA from mature subunits. May play a role in the assembly of ribosomal proteins into the subunit. Circularly permuted GTPase that catalyzes slow GTP hydrolysis, GTPase activity is stimulated by the 30S ribosomal subunit. The sequence is that of Small ribosomal subunit biogenesis GTPase RsgA from Burkholderia mallei (strain ATCC 23344).